Consider the following 421-residue polypeptide: Succinate--CoA ligase [ADP-forming] subunit beta, mitochondrial (421 aa).

Residues Met1–Arg26 constitute a mitochondrion transit peptide. Residues Ala35–Ala278 enclose the ATP-grasp domain. ATP is bound by residues Lys74, Gly81 to Gly83, and Glu141. Residues Asn233 and Asp247 each contribute to the Mg(2+) site. Substrate contacts are provided by residues Asn298 and Gly355–Met357.

Belongs to the succinate/malate CoA ligase beta subunit family. In terms of assembly, heterodimer of an alpha and a beta subunit. It depends on Mg(2+) as a cofactor.

The protein resides in the mitochondrion. The enzyme catalyses succinate + ATP + CoA = succinyl-CoA + ADP + phosphate. The protein operates within carbohydrate metabolism; tricarboxylic acid cycle; succinate from succinyl-CoA (ligase route): step 1/1. In terms of biological role, succinyl-CoA synthetase functions in the citric acid cycle (TCA), coupling the hydrolysis of succinyl-CoA to the synthesis of ATP and thus represents the only step of substrate-level phosphorylation in the TCA. The beta subunit provides nucleotide specificity of the enzyme and binds the substrate succinate, while the binding sites for coenzyme A and phosphate are found in the alpha subunit. The sequence is that of Succinate--CoA ligase [ADP-forming] subunit beta, mitochondrial from Arabidopsis thaliana (Mouse-ear cress).